Reading from the N-terminus, the 443-residue chain is Ribulose bisphosphate carboxylase large chain (443 aa).

Lysine 3 carries the post-translational modification N6,N6,N6-trimethyllysine. The substrate site is built by asparagine 112 and threonine 162. The active-site Proton acceptor is lysine 164. Lysine 166 lines the substrate pocket. Mg(2+) is bound by residues lysine 190, aspartate 192, and glutamate 193. Lysine 190 is modified (N6-carboxylysine). The active-site Proton acceptor is the histidine 283. Residues arginine 284, histidine 316, and serine 368 each coordinate substrate.

Belongs to the RuBisCO large chain family. Type I subfamily. As to quaternary structure, heterohexadecamer of 8 large chains and 8 small chains; disulfide-linked. The disulfide link is formed within the large subunit homodimers. Mg(2+) is required as a cofactor. In terms of processing, the disulfide bond which can form in the large chain dimeric partners within the hexadecamer appears to be associated with oxidative stress and protein turnover.

It is found in the plastid. It localises to the chloroplast. The enzyme catalyses 2 (2R)-3-phosphoglycerate + 2 H(+) = D-ribulose 1,5-bisphosphate + CO2 + H2O. It carries out the reaction D-ribulose 1,5-bisphosphate + O2 = 2-phosphoglycolate + (2R)-3-phosphoglycerate + 2 H(+). Functionally, ruBisCO catalyzes two reactions: the carboxylation of D-ribulose 1,5-bisphosphate, the primary event in carbon dioxide fixation, as well as the oxidative fragmentation of the pentose substrate in the photorespiration process. Both reactions occur simultaneously and in competition at the same active site. This Iris germanica (Bearded iris) protein is Ribulose bisphosphate carboxylase large chain.